Reading from the N-terminus, the 502-residue chain is MVLSHAVSESDVSVHSTFASRYVRTSLPRFKMPENSIPKEAAYQIINDELMLDGNPRLNLASFVTTWMEPECDKLIMSSINKNYVDMDEYPVTTELQNRCVNMIAHLFNAPLEEAETAVGVGTVGSSEAIMLAGLAFKRKWQNKRKAEGKPVDKPNIVTGANVQVCWEKFARYFEVELKEVKLSEGYYVMDPQQAVDMVDENTICVAAILGSTLNGEFEDVKLLNDLLVEKNKETGWDTPIHVDAASGGFIAPFLYPELEWDFRLPLVKSINVSGHKYGLVYAGIGWVIWRNKEDLPEELIFHINYLGADQPTFTLNFSKGSSQVIAQYYQLIRLGHEGYRNVMENCRENMIVLREGLEKTERFNIVSKDEGVPLVAFSLKDSSCHTEFEISDMLRRYGWIVPAYTMPPNAQHITVLRVVIREDFSRTLAERLVIDIEKVMRELDELPSRVIHKISLGQEKSESNSDNLMVTVKKSDIDKQRDIITGWKKFVADRKKTSGIC.

Ser-8 bears the Phosphoserine mark. Lys-277 bears the N6-(pyridoxal phosphate)lysine mark. Residues 469–502 (LMVTVKKSDIDKQRDIITGWKKFVADRKKTSGIC) are calmodulin-binding.

It belongs to the group II decarboxylase family. Homohexamer. Interacts with calmodulin with a 1:3 stoichiometry. Pyridoxal 5'-phosphate serves as cofactor. In terms of tissue distribution, expressed in roots. Detected at low levels in shoots of young seedlings. Not detected in the root tips or in the central vascular bundle in the elongating region of mature roots.

The catalysed reaction is L-glutamate + H(+) = 4-aminobutanoate + CO2. Its activity is regulated as follows. Up-regulated by calmodulin binding at physiological pH. Its function is as follows. Catalyzes the conversion of glutamate to 4-aminobutanoate (GABA). The calmodulin-binding is calcium-dependent and it is proposed to directly or indirectly form a calcium regulated control of GABA biosynthesis. This Arabidopsis thaliana (Mouse-ear cress) protein is Glutamate decarboxylase 1 (GAD1).